The following is a 157-amino-acid chain: Myosin regulatory light chain, striated adductor muscle (157 aa).

EF-hand domains follow at residues 16–51 (KQIQ…LGRA) and 85–120 (DSEE…MGDN). Residues aspartate 29, aspartate 31, aspartate 33, and aspartate 40 each contribute to the Ca(2+) site.

Its function is as follows. In molluscan muscle, calcium regulation is associated with myosin rather than with actin. Muscle myosin contains two types of light chains: the catalytic light chain, essential for ATPase activity, and the regulatory light chain, a calcium-binding protein responsible for Ca(2+) dependent binding and Ca(2+) dependent Mg-ATPase activity. This is Myosin regulatory light chain, striated adductor muscle from Argopecten irradians (Bay scallop).